The primary structure comprises 624 residues: Glycosyltransferase AglD (624 aa).

Aspartate 201 is a catalytic residue. The next 8 membrane-spanning stretches (helical) occupy residues 260–280 (VTIV…TLYI), 285–305 (VISV…VIYV), 381–401 (LLTI…TGGL), 427–447 (AAYV…GIAL), 496–518 (VGLT…LLAL), 532–552 (FFAV…GGVG), 556–576 (IAFT…ALAA), and 587–607 (VTIV…TTAV).

Belongs to the glycosyltransferase 2 family.

Its subcellular location is the cell membrane. It participates in cell surface structure biogenesis; S-layer biogenesis. In terms of biological role, involved in the assembly of a N-linked pentasaccharide that decorates the S-layer glycoprotein and flagellins. Catalyzes the addition of the mannose found at position 5 of the pentasaccharide to its own distinct dolichol phosphate carrier. This chain is Glycosyltransferase AglD (aglD), found in Haloferax volcanii (strain ATCC 29605 / DSM 3757 / JCM 8879 / NBRC 14742 / NCIMB 2012 / VKM B-1768 / DS2) (Halobacterium volcanii).